Here is a 384-residue protein sequence, read N- to C-terminus: MSIRKTNPFISMANSYVMDAPEPSNMSYFWNFGSLLGVCLVMQLCTGMFLAMHYCSNLDLAFISVQHMMTEVNYGWLLRYAHSNGAGFFFMFVYLHMARGIYYGSYRKPRMALWNMGVMMFLLMMMTAFMGYCLVYGQMSHWGATVMTNLVTAMPYLGQAMAEFIWGGSSVSNPTIQRFFSLHYLLPFVIAGICCLHLLALHSHGSNNPLGMTANIDRMPMHPFFLFKDTVTIFAFLFVYFFLISYYPEYLGDPENNIPGNPLVTPAAIVPEFYLLPFYAILRAISSKMMGVLAMLFAILILFVLPFVDFSIIRGNAFKFLSKILFGFFCVNFILLGLIGAMHIEVPYIIIGQLATIFYFSYFMILLPLISILENMLFYLAIKR.

4 helical membrane passes run phenylalanine 32–methionine 52, tryptophan 76–alanine 98, leucine 113–cysteine 133, and phenylalanine 179–leucine 199. Residues histidine 82 and histidine 96 each contribute to the heme b site. Residues histidine 183 and histidine 197 each contribute to the heme b site. Histidine 202 contributes to the a ubiquinone binding site. The next 4 helical transmembrane spans lie at phenylalanine 225–serine 245, methionine 289–aspartate 309, leucine 321–alanine 341, and tyrosine 348–proline 368.

It belongs to the cytochrome b family. In terms of assembly, fungal cytochrome b-c1 complex contains 10 subunits; 3 respiratory subunits, 2 core proteins and 5 low-molecular weight proteins. Cytochrome b-c1 complex is a homodimer. The cofactor is heme b.

The protein resides in the mitochondrion inner membrane. Functionally, component of the ubiquinol-cytochrome c reductase complex (complex III or cytochrome b-c1 complex) that is part of the mitochondrial respiratory chain. The b-c1 complex mediates electron transfer from ubiquinol to cytochrome c. Contributes to the generation of a proton gradient across the mitochondrial membrane that is then used for ATP synthesis. The protein is Cytochrome b (COB) of Starmerella bacillaris (Yeast).